Consider the following 150-residue polypeptide: Large ribosomal subunit protein uL15 (150 aa).

It belongs to the universal ribosomal protein uL15 family. In terms of assembly, part of the 50S ribosomal subunit.

Binds to the 23S rRNA. The chain is Large ribosomal subunit protein uL15 from Rickettsia typhi (strain ATCC VR-144 / Wilmington).